A 916-amino-acid chain; its full sequence is Protein translocase subunit SecA (916 aa).

ATP-binding positions include Gln-88, 106–110, and Asp-519; that span reads GEGKT. Residues Cys-902, Cys-904, Cys-913, and Cys-914 each coordinate Zn(2+).

The protein belongs to the SecA family. Monomer and homodimer. Part of the essential Sec protein translocation apparatus which comprises SecA, SecYEG and auxiliary proteins SecDF. Other proteins may also be involved. It depends on Zn(2+) as a cofactor.

It is found in the cell inner membrane. It localises to the cytoplasm. The catalysed reaction is ATP + H2O + cellular proteinSide 1 = ADP + phosphate + cellular proteinSide 2.. Part of the Sec protein translocase complex. Interacts with the SecYEG preprotein conducting channel. Has a central role in coupling the hydrolysis of ATP to the transfer of proteins into and across the cell membrane, serving as an ATP-driven molecular motor driving the stepwise translocation of polypeptide chains across the membrane. The protein is Protein translocase subunit SecA of Treponema pallidum (strain Nichols).